The following is a 242-amino-acid chain: ATP synthase subunit a, organellar chromatophore (242 aa).

A run of 5 helical transmembrane segments spans residues 28–48, 89–109, 128–148, 193–213, and 214–234; these read LHGQVFISSWVVISALLVLVI, LPFIGTLFLFIFGCNWGGALV, INTTVAMALLVSLSYFYAGLS, LVVGVLAFLVPILVPLPAMFL, and GLFTSAIQALIFATLAANYIG.

Belongs to the ATPase A chain family. In terms of assembly, F-type ATPases have 2 components, CF(1) - the catalytic core - and CF(0) - the membrane proton channel. CF(1) has five subunits: alpha(3), beta(3), gamma(1), delta(1), epsilon(1). CF(0) has four main subunits: a, b, b' and c.

The protein localises to the plastid. It is found in the organellar chromatophore thylakoid membrane. Functionally, key component of the proton channel; it plays a direct role in the translocation of protons across the membrane. The polypeptide is ATP synthase subunit a, organellar chromatophore (Paulinella chromatophora).